The following is a 132-amino-acid chain: uncharacterized protein (132 aa).

A helical membrane pass occupies residues 66–86 (LPPMLLVLAALFVKGLIPLVL).

Its subcellular location is the membrane. This is an uncharacterized protein from Saccharomyces cerevisiae (strain ATCC 204508 / S288c) (Baker's yeast).